An 847-amino-acid chain; its full sequence is Mitogen-activated protein kinase kinase kinase 11 (847 aa).

A Phosphoserine modification is found at S11. Positions 11–38 (SPLGSWNGSGSGGGGGGGGGRPEGSPKA) are disordered. Over residues 17 to 32 (NGSGSGGGGGGGGGRP) the composition is skewed to gly residues. Position 35 is a phosphoserine (S35). Residues 41 to 105 (YANPVWTALF…PSNYVSRGGG (65 aa)) enclose the SH3 domain. Residues 117-379 (LRLEEVIGIG…ASILQQLEAL (263 aa)) enclose the Protein kinase domain. Residues 123-131 (IGIGGFGKV) and K144 contribute to the ATP site. Residue D241 is the Proton acceptor of the active site. A Phosphothreonine; by autocatalysis modification is found at T277. S281 carries the phosphoserine; by autocatalysis and MAP4K1 modification. The residue at position 394 (S394) is a Phosphoserine. 2 leucine-zipper regions span residues 403–424 (IQGLFDELRAKEKELLSREEEL) and 438–459 (LRRREHLLAQWELEVFERELTL). 5 positions are modified to phosphoserine: S507, S524, S548, S555, and S556. Residues 537–643 (PAEPGQAWGR…SSGTPKLIQR (107 aa)) are disordered. A compositionally biased stretch (basic and acidic residues) spans 550–562 (RRLEDSSNGERRA). A compositionally biased stretch (low complexity) spans 597–609 (SSPLGSPSTPPAL). A phosphoserine mark is found at S654, S693, and S705. The tract at residues 655–847 (LGLGRDLQPP…QAPWVPEAGP (193 aa)) is disordered. Residues 676 to 694 (TTPPTPTPAPCPTEPPPSP) show a composition bias toward pro residues. At T708 the chain carries Phosphothreonine. Phosphoserine is present on residues S724, S727, S740, S748, S758, S770, S789, S793, and S815. Low complexity predominate over residues 760 to 773 (PLGLISRPRPSPLR). The segment covering 787–799 (RPSPLPSPQPAPR) has biased composition (pro residues). Positions 800–816 (RAPWTLFPDSDPFWDSP) are enriched in low complexity.

It belongs to the protein kinase superfamily. STE Ser/Thr protein kinase family. MAP kinase kinase kinase subfamily. In terms of assembly, homodimer; undergoes dimerization during activation. Interacts with MAP2K4/MKK4. Interacts with MAP2K7/MKK7. Found in a complex with SH3RF1, RAC1, MAP2K7/MKK7, MAPK8IP1/JIP1 and MAPK8/JNK1. It depends on Mg(2+) as a cofactor. In terms of processing, autophosphorylation on serine and threonine residues within the activation loop plays a role in enzyme activation. Thr-277 is likely to be the main autophosphorylation site. Phosphorylation of Ser-555 and Ser-556 is induced by CDC42. In terms of tissue distribution, expressed in a wide variety of normal and neoplastic tissues including fetal lung, liver, heart and kidney, and adult lung, liver, heart, kidney, placenta, skeletal muscle, pancreas and brain.

It localises to the cytoplasm. Its subcellular location is the cytoskeleton. The protein localises to the microtubule organizing center. It is found in the centrosome. The enzyme catalyses L-seryl-[protein] + ATP = O-phospho-L-seryl-[protein] + ADP + H(+). It carries out the reaction L-threonyl-[protein] + ATP = O-phospho-L-threonyl-[protein] + ADP + H(+). Its activity is regulated as follows. Homodimerization via the leucine zipper domains is required for autophosphorylation and subsequent activation. Functionally, activates the JUN N-terminal pathway. Required for serum-stimulated cell proliferation and for mitogen and cytokine activation of MAPK14 (p38), MAPK3 (ERK) and MAPK8 (JNK1) through phosphorylation and activation of MAP2K4/MKK4 and MAP2K7/MKK7. Plays a role in mitogen-stimulated phosphorylation and activation of BRAF, but does not phosphorylate BRAF directly. Influences microtubule organization during the cell cycle. The protein is Mitogen-activated protein kinase kinase kinase 11 of Homo sapiens (Human).